The sequence spans 246 residues: DNA repair protein RecO (246 aa).

It belongs to the RecO family.

In terms of biological role, involved in DNA repair and RecF pathway recombination. This chain is DNA repair protein RecO, found in Methylobacterium nodulans (strain LMG 21967 / CNCM I-2342 / ORS 2060).